The following is a 122-amino-acid chain: Atrial gland peptide B (122 aa).

An N-terminal signal peptide occupies residues 1–21; it reads MKANTMFIILCLTLSTLCVSS. Positions 22-34 are excised as a propeptide; the sequence is QFTSVLGKIFVTN. I69 carries the post-translational modification Isoleucine amide. Residues 73 to 122 constitute a propeptide that is removed on maturation; the sequence is AAGGMEQSEGQNPETKSHSWRERSVLTPSLLSLGESLESGISKRISINQD. The segment at 74–95 is disordered; that stretch reads AGGMEQSEGQNPETKSHSWRER.

This sequence belongs to the molluscan ELH family.

The protein localises to the secreted. Its function is as follows. The atrial gland peptide A and peptide B precursors are the source of the 2 peptides that, upon release from this reproductive system gland, initiate the egg-laying process by exciting the bag cell neurons. These neurons, clustered in neural connectives near the abdominal ganglion, in turn release other peptides that act directly on the ganglion and also, via the circulating hemolymph, on many other organs to control the physiological processes of egg-laying. One of these other peptides is the egg-laying hormone. This is Atrial gland peptide B from Aplysia californica (California sea hare).